Consider the following 369-residue polypeptide: Peptide chain release factor 2 (369 aa).

The residue at position 252 (Gln-252) is an N5-methylglutamine.

Belongs to the prokaryotic/mitochondrial release factor family. Post-translationally, methylated by PrmC. Methylation increases the termination efficiency of RF2.

Its subcellular location is the cytoplasm. Its function is as follows. Peptide chain release factor 2 directs the termination of translation in response to the peptide chain termination codons UGA and UAA. The chain is Peptide chain release factor 2 from Staphylococcus aureus (strain bovine RF122 / ET3-1).